The chain runs to 100 residues: UPF0125 protein HD_1828 (100 aa).

It belongs to the UPF0125 (RnfH) family.

The protein is UPF0125 protein HD_1828 of Haemophilus ducreyi (strain 35000HP / ATCC 700724).